Consider the following 145-residue polypeptide: D-aminoacyl-tRNA deacylase (145 aa).

The Gly-cisPro motif, important for rejection of L-amino acids signature appears at 137-138 (GP).

The protein belongs to the DTD family. Homodimer.

It localises to the cytoplasm. The catalysed reaction is glycyl-tRNA(Ala) + H2O = tRNA(Ala) + glycine + H(+). It catalyses the reaction a D-aminoacyl-tRNA + H2O = a tRNA + a D-alpha-amino acid + H(+). Functionally, an aminoacyl-tRNA editing enzyme that deacylates mischarged D-aminoacyl-tRNAs. Also deacylates mischarged glycyl-tRNA(Ala), protecting cells against glycine mischarging by AlaRS. Acts via tRNA-based rather than protein-based catalysis; rejects L-amino acids rather than detecting D-amino acids in the active site. By recycling D-aminoacyl-tRNA to D-amino acids and free tRNA molecules, this enzyme counteracts the toxicity associated with the formation of D-aminoacyl-tRNA entities in vivo and helps enforce protein L-homochirality. This Dichelobacter nodosus (strain VCS1703A) protein is D-aminoacyl-tRNA deacylase.